Reading from the N-terminus, the 309-residue chain is Homoserine O-succinyltransferase (309 aa).

The active-site Acyl-thioester intermediate is C142. Substrate is bound by residues K163 and S192. Residue H235 is the Proton acceptor of the active site. E237 is an active-site residue. Substrate is bound at residue R249.

This sequence belongs to the MetA family. As to quaternary structure, homodimer.

It localises to the cytoplasm. It catalyses the reaction L-homoserine + succinyl-CoA = O-succinyl-L-homoserine + CoA. It participates in amino-acid biosynthesis; L-methionine biosynthesis via de novo pathway; O-succinyl-L-homoserine from L-homoserine: step 1/1. Transfers a succinyl group from succinyl-CoA to L-homoserine, forming succinyl-L-homoserine. This Escherichia coli O17:K52:H18 (strain UMN026 / ExPEC) protein is Homoserine O-succinyltransferase.